Consider the following 179-residue polypeptide: Adenine phosphoribosyltransferase (179 aa).

It belongs to the purine/pyrimidine phosphoribosyltransferase family. Homodimer.

It is found in the cytoplasm. It carries out the reaction AMP + diphosphate = 5-phospho-alpha-D-ribose 1-diphosphate + adenine. Its pathway is purine metabolism; AMP biosynthesis via salvage pathway; AMP from adenine: step 1/1. Catalyzes a salvage reaction resulting in the formation of AMP, that is energically less costly than de novo synthesis. The chain is Adenine phosphoribosyltransferase from Helicobacter pylori (strain G27).